The chain runs to 375 residues: Serine protease 23 (375 aa).

Positions 1 to 23 (MAGTPGHPIFLLLLLRAIGQVSP) are cleaved as a signal peptide. Residue Asn93 is glycosylated (N-linked (GlcNAc...) asparagine). Cys153 and Cys169 are joined by a disulfide. The active-site Charge relay system is His168. N-linked (GlcNAc...) asparagine glycosylation is present at Asn199. Residues Asp232 and Ser308 each act as charge relay system in the active site.

This sequence belongs to the peptidase S1 family.

The protein localises to the secreted. This is Serine protease 23 (PRSS23) from Bos taurus (Bovine).